Here is a 303-residue protein sequence, read N- to C-terminus: MIKQRTLKNEIRATGVGLHTGQKVYLTLLPAPVDAGIVFRRVDLNPVVEIPAKAANVGDTTLSTTLIQDGVRVSTVEHLLSAMAGLGIDNAIIEVSADEVPIMDGSAGPFVFLIQSAGIVEQNAAKKFIRIKKPITVQDGDKSASFLPFEGFKVSFTIDFDHPVFRGRKLDATVDFSSTSFVKEVSRARTFGFMHEIEYLRSKGLAKGGSVDNAIVVDKFRILNEDGLRYEDEFVKHKILDAIGDLYLLGTSLIGEYKAYKSGHGLNNKSLLELIKQEDAWEMVTFEDDEVAPISYIKPLLAV.

Zn(2+) contacts are provided by histidine 78, histidine 237, and aspartate 241. Histidine 264 (proton donor) is an active-site residue.

This sequence belongs to the LpxC family. It depends on Zn(2+) as a cofactor.

The catalysed reaction is a UDP-3-O-[(3R)-3-hydroxyacyl]-N-acetyl-alpha-D-glucosamine + H2O = a UDP-3-O-[(3R)-3-hydroxyacyl]-alpha-D-glucosamine + acetate. It participates in glycolipid biosynthesis; lipid IV(A) biosynthesis; lipid IV(A) from (3R)-3-hydroxytetradecanoyl-[acyl-carrier-protein] and UDP-N-acetyl-alpha-D-glucosamine: step 2/6. In terms of biological role, catalyzes the hydrolysis of UDP-3-O-myristoyl-N-acetylglucosamine to form UDP-3-O-myristoylglucosamine and acetate, the committed step in lipid A biosynthesis. The polypeptide is UDP-3-O-acyl-N-acetylglucosamine deacetylase (Saccharophagus degradans (strain 2-40 / ATCC 43961 / DSM 17024)).